Here is a 101-residue protein sequence, read N- to C-terminus: Small ribosomal subunit protein uS14 (101 aa).

The disordered stretch occupies residues 49 to 70 (QSLPRDSSPSRQRNRCNQTGRP). A compositionally biased stretch (polar residues) spans 52–68 (PRDSSPSRQRNRCNQTG).

This sequence belongs to the universal ribosomal protein uS14 family. As to quaternary structure, part of the 30S ribosomal subunit. Contacts proteins S3 and S10.

In terms of biological role, binds 16S rRNA, required for the assembly of 30S particles and may also be responsible for determining the conformation of the 16S rRNA at the A site. In Yersinia pseudotuberculosis serotype O:1b (strain IP 31758), this protein is Small ribosomal subunit protein uS14.